Here is a 148-residue protein sequence, read N- to C-terminus: Large ribosomal subunit protein bL9 (148 aa).

This sequence belongs to the bacterial ribosomal protein bL9 family.

Functionally, binds to the 23S rRNA. This Streptomyces griseus subsp. griseus (strain JCM 4626 / CBS 651.72 / NBRC 13350 / KCC S-0626 / ISP 5235) protein is Large ribosomal subunit protein bL9.